A 221-amino-acid polypeptide reads, in one-letter code: MKFATVLAFATAAGAAFASPLASSETTEAGQLSKRQSINYVQNYNGNAANFKYDQHAGTYSTRWTNPPDFVVGLGWSPGNSYRTIKFSGSYSSSSSSYSAVYGWLNNPLTEYYVVENYSYDPCSNSGAQVVGSVTSDGSNYKICKHTQYDQPSIQGTKTFGQYFSVRANKRNSGSVTLSKHFNAWKQHGFANGAANPDFNYQVFATEAFGGTGSASMSVSG.

An N-terminal signal peptide occupies residues 1–18; the sequence is MKFATVLAFATAAGAAFA. Residues 23 to 220 enclose the GH11 domain; it reads SSETTEAGQL…GTGSASMSVS (198 aa). The active-site Nucleophile is the E111. An N-linked (GlcNAc...) asparagine glycan is attached at N117. Residue E207 is the Proton donor of the active site.

This sequence belongs to the glycosyl hydrolase 11 (cellulase G) family.

Its subcellular location is the secreted. It carries out the reaction Endohydrolysis of (1-&gt;4)-beta-D-xylosidic linkages in xylans.. The protein operates within glycan degradation; xylan degradation. Functionally, endo-1,4-beta-xylanase involved in the hydrolysis of xylan, a major structural heterogeneous polysaccharide found in plant biomass representing the second most abundant polysaccharide in the biosphere, after cellulose. The sequence is that of Endo-1,4-beta-xylanase 11A (XYN11A) from Mycosarcoma maydis (Corn smut fungus).